The sequence spans 552 residues: MFCIQCEQTIRTPAGNGCSYSQGMCGKLAETSDLQDLLIYVLQGVSAYAVKAREFDIIDHEIDTFVPKAFFATLTNVNFDDARLVEYVEQANAYRGRLQDAYETACTAKGVTPEQMSAPAQLILATSKPEMITQAAQAAPNRGDVHEDILGLRLLCLYGLKGAAAYMEHARVLSQTNDEVAGQFHEIMAFLGEDSVDVDKLFATSMEIGQLNYKVMAMLDEGETESFGHPEPTQVNTVAVKGKAILVSGHDMVDLELILKQTEGKGINVFTHGEMLPALAYPEFKKYPHLVGNYGSAWQNQQKEFANFPGAVVMTSNCIIDPNVGSYADRIFTRSIVGWPGVTHLVGDDFTPVIEKALALDGFIYDEIPHLITIGFARNALMAAAPAVIDNVKNGSIKHFFLVGGCDGDKAERSYFTDIATQAPDDSVILTLGCGKYKFNKLEFGDINGIPRLLDIGQCNDSYSAIQLAIALSEAFECEINELPLSIVLSWFEQKAIVVLLTLLSLGVKNIRTGPTPPAFLTPNLLKILEDKFGLRNTTTVEEDLKTILNVA.

[2Fe-2S] cluster-binding residues include C3, C6, C18, and C25. Positions 250, 274, 318, 406, 434, 459, 493, and 495 each coordinate hybrid [4Fe-2O-2S] cluster. A Cysteine persulfide modification is found at C406.

Belongs to the HCP family. It depends on [2Fe-2S] cluster as a cofactor. Hybrid [4Fe-2O-2S] cluster is required as a cofactor.

It localises to the cytoplasm. The catalysed reaction is A + NH4(+) + H2O = hydroxylamine + AH2 + H(+). In terms of biological role, catalyzes the reduction of hydroxylamine to form NH(3) and H(2)O. In Shewanella sediminis (strain HAW-EB3), this protein is Hydroxylamine reductase.